The primary structure comprises 369 residues: Histidinol-phosphate aminotransferase (369 aa).

N6-(pyridoxal phosphate)lysine is present on Lys-223.

Belongs to the class-II pyridoxal-phosphate-dependent aminotransferase family. Histidinol-phosphate aminotransferase subfamily. As to quaternary structure, homodimer. Requires pyridoxal 5'-phosphate as cofactor.

The catalysed reaction is L-histidinol phosphate + 2-oxoglutarate = 3-(imidazol-4-yl)-2-oxopropyl phosphate + L-glutamate. It functions in the pathway amino-acid biosynthesis; L-histidine biosynthesis; L-histidine from 5-phospho-alpha-D-ribose 1-diphosphate: step 7/9. In Shouchella clausii (strain KSM-K16) (Alkalihalobacillus clausii), this protein is Histidinol-phosphate aminotransferase.